The chain runs to 265 residues: Exosome complex component RRP42 (265 aa).

Belongs to the RNase PH family. As to quaternary structure, component of the RNA exosome complex. Specifically part of the catalytically inactive RNA exosome core complex (Exo-9) which may associate with the catalytic subunits RRP6 and DIS3 in cytoplasmic- and nuclear-specific RNA exosome complex forms. Exo-9 is formed by a hexameric base ring of RNase PH domain-containing subunits and a cap ring consisting of CSL4, RRP4 and RRP40.

The protein localises to the cytoplasm. Its subcellular location is the nucleus. It localises to the nucleolus. In terms of biological role, non-catalytic component of the RNA exosome complex which has 3'-&gt;5' exoribonuclease activity and participates in a multitude of cellular RNA processing and degradation events. In the nucleus, the RNA exosome complex is involved in proper maturation of stable RNA species such as rRNA, snRNA and snoRNA, in the elimination of RNA processing by-products and non-coding 'pervasive' transcripts, such as antisense RNA species and cryptic unstable transcripts (CUTs), and of mRNAs with processing defects, thereby limiting or excluding their export to the cytoplasm. In the cytoplasm, the RNA exosome complex is involved in general mRNA turnover and in RNA surveillance pathways, preventing translation of aberrant mRNAs. The catalytic inactive RNA exosome core complex of 9 subunits (Exo-9) is proposed to play a pivotal role in the binding and presentation of RNA for ribonucleolysis, and to serve as a scaffold for the association with catalytic subunits and accessory proteins or complexes. RRP42 is part of the hexameric ring of RNase PH domain-containing subunits proposed to form a central channel which threads RNA substrates for degradation. The sequence is that of Exosome complex component RRP42 (RRP42) from Saccharomyces cerevisiae (strain ATCC 204508 / S288c) (Baker's yeast).